A 320-amino-acid polypeptide reads, in one-letter code: Methionyl-tRNA formyltransferase (320 aa).

112–115 (SILP) contributes to the (6S)-5,6,7,8-tetrahydrofolate binding site.

The protein belongs to the Fmt family.

It catalyses the reaction L-methionyl-tRNA(fMet) + (6R)-10-formyltetrahydrofolate = N-formyl-L-methionyl-tRNA(fMet) + (6S)-5,6,7,8-tetrahydrofolate + H(+). Its function is as follows. Attaches a formyl group to the free amino group of methionyl-tRNA(fMet). The formyl group appears to play a dual role in the initiator identity of N-formylmethionyl-tRNA by promoting its recognition by IF2 and preventing the misappropriation of this tRNA by the elongation apparatus. In Shewanella woodyi (strain ATCC 51908 / MS32), this protein is Methionyl-tRNA formyltransferase.